We begin with the raw amino-acid sequence, 200 residues long: Transcriptional repressor NrdR (200 aa).

A zinc finger lies at 3–34; it reads CPFCQNPDTKVIDTRISDDGHSIRRRRECPNC. Positions 46-136 constitute an ATP-cone domain; sequence LLVKKRSGNV…VYQNFEDLED (91 aa).

Belongs to the NrdR family. Requires Zn(2+) as cofactor.

Its function is as follows. Negatively regulates transcription of bacterial ribonucleotide reductase nrd genes and operons by binding to NrdR-boxes. The sequence is that of Transcriptional repressor NrdR from Bifidobacterium animalis subsp. lactis (strain AD011).